The sequence spans 629 residues: tRNA uridine 5-carboxymethylaminomethyl modification enzyme MnmG (629 aa).

FAD is bound by residues G13–G18, V125, and S180. G273–F287 serves as a coordination point for NAD(+). Q370 serves as a coordination point for FAD.

This sequence belongs to the MnmG family. In terms of assembly, homodimer. Heterotetramer of two MnmE and two MnmG subunits. FAD serves as cofactor.

The protein resides in the cytoplasm. Its function is as follows. NAD-binding protein involved in the addition of a carboxymethylaminomethyl (cmnm) group at the wobble position (U34) of certain tRNAs, forming tRNA-cmnm(5)s(2)U34. The sequence is that of tRNA uridine 5-carboxymethylaminomethyl modification enzyme MnmG from Cronobacter sakazakii (strain ATCC BAA-894) (Enterobacter sakazakii).